The chain runs to 392 residues: Na(+)/H(+) antiporter NhaA (392 aa).

11 consecutive transmembrane segments (helical) span residues 17–37 (ILLIVAAIIALIMANTPLSAL), 59–79 (LILWVNDALMAIFFLVVGLEV), 95–115 (IFPAIAAVGGMLAPALIYLFF), 125–145 (GWAIPAATDIAFALGVMALLG), 154–174 (VFLLALAIIDDLGVIVIIALF), 179–199 (VALVPLLLAALITIMLFILNW), 213–233 (FILWVCILKSGIHATIAGVIV), 254–274 (VLHPWVAYLILPLFAFSNAGV), 290–310 (VGIALGLFLGKPIGIFLFSWV), 328–348 (IFAVSVLCGIGFTMSIFIAGL), and 363–383 (LGILVGSTMAAVVGYLLLNSV).

Belongs to the NhaA Na(+)/H(+) (TC 2.A.33) antiporter family.

It is found in the cell inner membrane. It catalyses the reaction Na(+)(in) + 2 H(+)(out) = Na(+)(out) + 2 H(+)(in). In terms of biological role, na(+)/H(+) antiporter that extrudes sodium in exchange for external protons. The sequence is that of Na(+)/H(+) antiporter NhaA from Proteus mirabilis (strain HI4320).